Reading from the N-terminus, the 487-residue chain is Proline--tRNA ligase (487 aa).

This sequence belongs to the class-II aminoacyl-tRNA synthetase family. ProS type 3 subfamily. Homodimer.

It is found in the cytoplasm. It carries out the reaction tRNA(Pro) + L-proline + ATP = L-prolyl-tRNA(Pro) + AMP + diphosphate. Its function is as follows. Catalyzes the attachment of proline to tRNA(Pro) in a two-step reaction: proline is first activated by ATP to form Pro-AMP and then transferred to the acceptor end of tRNA(Pro). The protein is Proline--tRNA ligase of Pyrobaculum calidifontis (strain DSM 21063 / JCM 11548 / VA1).